The following is a 633-amino-acid chain: tRNA uridine 5-carboxymethylaminomethyl modification enzyme MnmG (633 aa).

FAD-binding positions include Gly15–Gly20, Ile127, and Ser182. Gly276–Phe290 contacts NAD(+). Residue Gln373 coordinates FAD.

It belongs to the MnmG family. Homodimer. Heterotetramer of two MnmE and two MnmG subunits. The cofactor is FAD.

Its subcellular location is the cytoplasm. In terms of biological role, NAD-binding protein involved in the addition of a carboxymethylaminomethyl (cmnm) group at the wobble position (U34) of certain tRNAs, forming tRNA-cmnm(5)s(2)U34. This chain is tRNA uridine 5-carboxymethylaminomethyl modification enzyme MnmG, found in Streptococcus agalactiae serotype Ia (strain ATCC 27591 / A909 / CDC SS700).